The sequence spans 72 residues: Translation initiation factor IF-1 (72 aa).

Residues 1 to 72 (MAKDDVIEIE…TKGRITYRFK (72 aa)) enclose the S1-like domain.

It belongs to the IF-1 family. In terms of assembly, component of the 30S ribosomal translation pre-initiation complex which assembles on the 30S ribosome in the order IF-2 and IF-3, IF-1 and N-formylmethionyl-tRNA(fMet); mRNA recruitment can occur at any time during PIC assembly.

The protein localises to the cytoplasm. One of the essential components for the initiation of protein synthesis. Stabilizes the binding of IF-2 and IF-3 on the 30S subunit to which N-formylmethionyl-tRNA(fMet) subsequently binds. Helps modulate mRNA selection, yielding the 30S pre-initiation complex (PIC). Upon addition of the 50S ribosomal subunit IF-1, IF-2 and IF-3 are released leaving the mature 70S translation initiation complex. In Ligilactobacillus salivarius (strain UCC118) (Lactobacillus salivarius), this protein is Translation initiation factor IF-1.